The primary structure comprises 723 residues: Transient receptor potential cation channel subfamily V member 5 (723 aa).

Residues 1–320 (MGVKKPWIQL…SLKWKKYGQP (320 aa)) are Cytoplasmic-facing. ANK repeat units follow at residues 72 to 101 (LGETALHVAALYDNLDAAIMLMETAPYLVT), 110 to 139 (VGQTALHIAIMNQNVNLVRALLARGASASA), 156 to 185 (YGEHPLSFAACVGSEEIVRLLIEHGADIRA), 189 to 222 (LGNTVLHILVLQPNKTFACQMYNLLLSHDGGDHL), and 232 to 261 (QGLTPFKLAGVEGNTVMFQHLMQKRKHIQW). Residues 321–341 (YFCLLGMLYIFYMICFTTCCV) form a helical membrane-spanning segment. Residues 342-378 (YRPLKFRDANRTHVRDNTVLEQKPLQEAYVTYQDKVR) are Extracellular-facing. Asn-351 is a glycosylation site (N-linked (GlcNAc...) asparagine). A helical transmembrane segment spans residues 379–401 (LVGELVTVIGAVVILLIEIPDIF). At 402-412 (RVGASRYFGHT) the chain is on the cytoplasmic side. Residues 413–435 (VLGGPFHVIIITYASLVLLIMVM) form a helical membrane-spanning segment. Residues 436 to 441 (RLTSMN) lie on the Extracellular side of the membrane. A helical membrane pass occupies residues 442–462 (GEVVPISMALVLGWCSVMYFS). The Cytoplasmic portion of the chain corresponds to 463–485 (RGFQMLGPFTIMIQKMIFGDLLR). The helical transmembrane segment at 486 to 506 (FCWLMAMVILGFASAFYIIFQ) threads the bilayer. Residues 517–537 (SDYPTAMFSTFELFLTIIDGP) constitute an intramembrane region (pore-forming). A Ca(2+)-binding site is contributed by Asp-535. The chain crosses the membrane as a helical span at residues 550–570 (LTYFAFAIIATLLMLNLFIAM). Residues 571–723 (MGDTHWRVAQ…EGDGEEIYHF (153 aa)) are Cytoplasmic-facing. The interaction with S100A10 stretch occupies residues 591–595 (VATTV). The interval 643 to 646 (AFKS) is involved in Ca(2+)-dependent inactivation. The interval 651 to 674 (EVQEQLSEKQPSGTETGTLARGSV) is disordered. Residues 654–667 (EQLSEKQPSGTETG) show a composition bias toward polar residues. Position 678 is a phosphothreonine (Thr-678). Ser-682 is modified (phosphoserine). An involved in Ca(2+)-dependent inactivation region spans residues 693 to 723 (RGWEILRRNTLGHLNLGQDLGEGDGEEIYHF).

It belongs to the transient receptor (TC 1.A.4) family. TrpV subfamily. TRPV5 sub-subfamily. In terms of assembly, homotetramer and probably heterotetramer with TRPV6. Interacts with TRPV6. Interacts with S100A10 and probably with the ANAX2-S100A10 heterotetramer. The interaction with S100A10 is required for the trafficking to the plasma membrane. Interacts with calmodulin. Interacts with BSPRY, which results in its inactivation. Glycosylated. In terms of tissue distribution, detected in kidney (at protein level). Detected in kidney.

The protein localises to the cell membrane. It localises to the apical cell membrane. It catalyses the reaction Ca(2+)(in) = Ca(2+)(out). With respect to regulation, activated by WNK3. Its function is as follows. Constitutively active calcium selective cation channel thought to be involved in Ca(2+) reabsorption in kidney and intestine. Required for normal Ca(2+) reabsorption in the kidney distal convoluted tubules. The channel is activated by low internal calcium level and the current exhibits an inward rectification. A Ca(2+)-dependent feedback regulation includes fast channel inactivation and slow current decay. Heteromeric assembly with TRPV6 seems to modify channel properties. TRPV5-TRPV6 heteromultimeric concatemers exhibit voltage-dependent gating. In Rattus norvegicus (Rat), this protein is Transient receptor potential cation channel subfamily V member 5 (Trpv5).